A 334-amino-acid polypeptide reads, in one-letter code: Serine/Arginine-related protein 53 (334 aa).

Residues 1–13 are compositionally biased toward basic and acidic residues; the sequence is MGRRSSDTEEESR. Disordered regions lie at residues 1–179, 198–220, and 246–290; these read MGRR…HLPP, DEALKAKERSEEEAKRRKEEDQA, and RSSK…SIPT. A compositionally biased stretch (basic residues) spans 14–24; that stretch reads SKRKKKHRRRS. Residues 44–62 show a composition bias toward basic and acidic residues; the sequence is PRSDSRSWSRDRQLRSHSY. A compositionally biased stretch (basic residues) spans 78-118; it reads SRRKRSRSRSRGRGKPYRVQRSRSKSRTRRSRSRPRPRSHS. Basic and acidic residues-rich tracts occupy residues 132–166, 198–218, and 247–256; these read RSRDRDRRKVRDKEKREKEKDKGKDKEVHSIKRGD, DEALKAKERSEEEAKRRKEED, and SSKDVKKAVE. The stretch at 180–236 forms a coiled coil; it reads AEQAKARLQLVLEAAAKADEALKAKERSEEEAKRRKEEDQATLVEQVKRVKEIEAIE. A compositionally biased stretch (low complexity) spans 265-278; the sequence is AASGPASAAAEPPS.

In terms of assembly, interacts (via Arg/Ser-rich domain) with LUC7L3, RBM39 and RSF1. Phosphorylated.

The protein localises to the nucleus. It is found in the nucleus speckle. The protein resides in the cytoplasm. Functionally, plays a role in pre-mRNA splicing. Involved in both constitutive and alternative pre-mRNA splicing. May have a role in the recognition of the 3' splice site during the second step of splicing. The polypeptide is Serine/Arginine-related protein 53 (Rsrc1) (Mus musculus (Mouse)).